The sequence spans 553 residues: CTP synthase (553 aa).

An amidoligase domain region spans residues 1–277; it reads MPTEPETDYD…DQYVMEELDI (277 aa). Residue Ser26 participates in CTP binding. Ser26 is a binding site for UTP. ATP-binding positions include 27-32 and Asp84; that span reads GLGKGI. Positions 84 and 152 each coordinate Mg(2+). CTP-binding positions include 159–161, 198–203, and Lys234; these read DIE and KTKPTQ. UTP contacts are provided by residues 198-203 and Lys234; that span reads KTKPTQ. Positions 307 to 544 constitute a Glutamine amidotransferase type-1 domain; that stretch reads LVGKYDLEDA…LEAVLGDDPH (238 aa). An L-glutamine-binding site is contributed by Gly364. The active-site Nucleophile; for glutamine hydrolysis is the Cys391. L-glutamine contacts are provided by residues 392-395, Glu415, and Arg472; that span reads LGFQ. Residues His517 and Glu519 contribute to the active site.

This sequence belongs to the CTP synthase family. As to quaternary structure, homotetramer.

The catalysed reaction is UTP + L-glutamine + ATP + H2O = CTP + L-glutamate + ADP + phosphate + 2 H(+). The enzyme catalyses L-glutamine + H2O = L-glutamate + NH4(+). It catalyses the reaction UTP + NH4(+) + ATP = CTP + ADP + phosphate + 2 H(+). Its pathway is pyrimidine metabolism; CTP biosynthesis via de novo pathway; CTP from UDP: step 2/2. With respect to regulation, allosterically activated by GTP, when glutamine is the substrate; GTP has no effect on the reaction when ammonia is the substrate. The allosteric effector GTP functions by stabilizing the protein conformation that binds the tetrahedral intermediate(s) formed during glutamine hydrolysis. Inhibited by the product CTP, via allosteric rather than competitive inhibition. In terms of biological role, catalyzes the ATP-dependent amination of UTP to CTP with either L-glutamine or ammonia as the source of nitrogen. Regulates intracellular CTP levels through interactions with the four ribonucleotide triphosphates. The protein is CTP synthase of Haloarcula marismortui (strain ATCC 43049 / DSM 3752 / JCM 8966 / VKM B-1809) (Halobacterium marismortui).